The chain runs to 317 residues: MKI67 FHA domain-interacting nucleolar phosphoprotein (317 aa).

The residue at position 2 (alanine 2) is an N-acetylalanine. A Glycyl lysine isopeptide (Lys-Gly) (interchain with G-Cter in SUMO2) cross-link involves residue lysine 40. Positions 47–125 (GVVYLGHLPS…RLLSCKFMPR (79 aa)) constitute an RRM domain. Residue arginine 116 is modified to Omega-N-methylarginine. Residues lysine 181 and lysine 194 each participate in a glycyl lysine isopeptide (Lys-Gly) (interchain with G-Cter in SUMO2) cross-link. Residue arginine 203 is modified to Citrulline. The segment at 203-317 (RDSEGNQVLP…KRPRKRKSKQ (115 aa)) is disordered. Positions 213–233 (DQKEGLSGEPRRKEKMMKEDI) are enriched in basic and acidic residues. At serine 219 the chain carries Phosphoserine. Basic residues predominate over residues 238-248 (PKKRKRSRRKK). Serine 253 is modified (phosphoserine). Residues threonine 257 and threonine 261 each carry the phosphothreonine modification. The span at 265–284 (LERRKSQVMEVGGDKDDEII) shows a compositional bias: basic and acidic residues. An omega-N-methylated arginine mark is found at arginine 267 and arginine 268. Serine 270 is modified (phosphoserine). Lysine 293 is covalently cross-linked (Glycyl lysine isopeptide (Lys-Gly) (interchain with G-Cter in SUMO1); alternate). Lysine 293 participates in a covalent cross-link: Glycyl lysine isopeptide (Lys-Gly) (interchain with G-Cter in SUMO2); alternate. Threonine 301 is subject to Phosphothreonine. The span at 308–317 (KRPRKRKSKQ) shows a compositional bias: basic residues.

Binds to the FHA domain of MKI67; this interaction is enhanced in mitosis. Phosphorylated. In terms of processing, citrullinated by PADI4. As to expression, expressed in brain, heart, hind limb muscles, intestine, liver, skin and spleen.

It is found in the nucleus. The protein localises to the nucleolus. The protein resides in the chromosome. The protein is MKI67 FHA domain-interacting nucleolar phosphoprotein (Nifk) of Mus musculus (Mouse).